The sequence spans 317 residues: Tenomodulin (317 aa).

Residues 1–30 (MAKNPPENCEGCHILNAEALKSKKIRKSLK) are Cytoplasmic-facing. The helical; Signal-anchor for type II membrane protein transmembrane segment at 31-50 (ICGLVFGILALTLIVLFWGS) threads the bilayer. The Extracellular portion of the chain corresponds to 51–317 (KHFWPEVSKK…WWVARMLGRV (267 aa)). The region spanning 93–186 (GNGTDETLEV…ICDNVTMYWI (94 aa)) is the BRICHOS domain. N-linked (GlcNAc...) asparagine glycosylation occurs at N94. C120 and C178 form a disulfide bridge. N-linked (GlcNAc...) asparagine glycosylation is present at N180. Phosphoserine is present on S239.

Belongs to the chondromodulin-1 family. Highly expressed in tendons.

Its subcellular location is the membrane. It is found in the nucleus envelope. In terms of biological role, may be an angiogenesis inhibitor. This Rattus norvegicus (Rat) protein is Tenomodulin (Tnmd).